The chain runs to 342 residues: Signal-regulatory protein beta-2 (342 aa).

An N-terminal signal peptide occupies residues 1–32 (MCSTMSAPTCLAHLPPCFLLLALVLVPSDASG). 2 consecutive Ig-like V-type domains span residues 33–143 (QSSR…KSDE) and 157–258 (PDLW…SGQG). The Extracellular portion of the chain corresponds to 33–287 (QSSRNDWQVL…EPATEMSPTG (255 aa)). C60 and C127 are joined by a disulfide. 3 N-linked (GlcNAc...) asparagine glycosylation sites follow: N116, N179, and N231. Cysteines 180 and 242 form a disulfide. A helical transmembrane segment spans residues 288–308 (LLVVFAPVVLGLKAITLAALL). Residues 309 to 342 (LALATSRRSPGQEDVKTTGPAGAMNTLAWSKGQE) lie on the Cytoplasmic side of the membrane. Residues 317-342 (SPGQEDVKTTGPAGAMNTLAWSKGQE) are disordered.

Its subcellular location is the membrane. The chain is Signal-regulatory protein beta-2 (SIRPB2) from Homo sapiens (Human).